A 393-amino-acid polypeptide reads, in one-letter code: High mobility group protein DSP1 (393 aa).

A disordered region spans residues 153–179 (QMQQQQQQQNVINSASPMSRVKADAKP). 2 consecutive DNA-binding regions (HMG box) follow at residues 179 to 249 (PRGR…QNYV) and 271 to 339 (PKRS…TEYK). The segment covering 364–374 (LLAAAAQQQHQ) has biased composition (low complexity). The segment at 364–393 (LLAAAAQQQHQQLEEQHDDDDGDGDDDENQ) is disordered. The segment covering 379–393 (QHDDDDGDGDDDENQ) has biased composition (acidic residues).

This sequence belongs to the HMGB family.

The protein localises to the nucleus. The protein resides in the chromosome. Its function is as follows. Binds preferentially single-stranded DNA and unwinds double-stranded DNA. This is High mobility group protein DSP1 (Dsp1) from Drosophila melanogaster (Fruit fly).